The chain runs to 405 residues: MAAVVQNVVKLLGEQYYRDAMEQCHNYNARLCAERSVRLPFLDSQTGVAQSNCYIWMEKRHRGPGLAAGQLYSYPARRWRKKRRAHPPEDPRLSFPSIKPDTDQTLKKEGLISQDGSSLEALLRTDPLEKRSLPDPRMDDDSLGEFPVTNSRARKRILEPDDFLDDLDDEDYEEDTPKRRGKGKAKGKGVGGARKKLDAAILEDRDKPYACDNSYKQKHSLKPPDRVCGKRYKNRPGLSYHYAHSHLAEEEGDDKDDSQPPTPVSQRSEEQKSKKGPDGLALPNNYCDFCLGDSKINKKTGQPEELVSCSDCGRSGHPSCLQFTPVMMAAVKTYRWQCIECKCCNICGTSENDDQLLFCDDCDRGYHMYCLTPPMSEPPEGSWSCHLCLDLLKEKASIYQNQNNS.

Disordered regions lie at residues 80–147, 165–194, 210–230, and 248–280; these read RKKR…GEFP, DDLDDEDYEEDTPKRRGKGKAKGKGVGGAR, ACDNSYKQKHSLKPPDRVCGK, and AEEEGDDKDDSQPPTPVSQRSEEQKSKKGPDGL. Basic and acidic residues-rich tracts occupy residues 100 to 110 and 126 to 140; these read PDTDQTLKKEG and DPLEKRSLPDPRMDD. Over residues 165–174 the composition is skewed to acidic residues; that stretch reads DDLDDEDYEE. The C2H2-type; atypical zinc finger occupies 209–246; the sequence is YACDNSYKQKHSLKPPDRVCGKRYKNRPGLSYHYAHSH. The span at 267-277 shows a compositional bias: basic and acidic residues; sequence RSEEQKSKKGP. 2 PHD-type zinc fingers span residues 284 to 344 and 341 to 391; these read NNYC…CKCC and CKCC…CLDL.

It belongs to the requiem/DPF family.

It is found in the cytoplasm. The protein localises to the nucleus. Functionally, may be a transcription factor required for the apoptosis response following survival factor withdrawal from myeloid cells. Might also have a role in the development and maturation of lymphoid cells. The polypeptide is Zinc finger protein ubi-d4 (REQ) (Gallus gallus (Chicken)).